The sequence spans 100 residues: Small ribosomal subunit protein uS14c (100 aa).

The protein belongs to the universal ribosomal protein uS14 family. In terms of assembly, part of the 30S ribosomal subunit.

Its subcellular location is the plastid. The protein resides in the chloroplast. In terms of biological role, binds 16S rRNA, required for the assembly of 30S particles. This Chlamydomonas reinhardtii (Chlamydomonas smithii) protein is Small ribosomal subunit protein uS14c.